The chain runs to 187 residues: uncharacterized protein (187 aa).

Residues 1–95 form a disordered region; it reads MTTMKRSADP…GSTRPSARYG (95 aa). Residues 46–80 are compositionally biased toward basic residues; it reads RARRSRGPKRFLGKRNYRRARARKPGKRDRAHSSK.

Its subcellular location is the mitochondrion. This is an uncharacterized protein from Arabidopsis thaliana (Mouse-ear cress).